The sequence spans 883 residues: DNA mismatch repair protein MutS (883 aa).

The disordered stretch occupies residues 1-25; sequence MSDSVAPDVPVIREGKNPAQHRDRT. The segment covering 11–25 has biased composition (basic and acidic residues); that stretch reads VIREGKNPAQHRDRT. 664–671 contributes to the ATP binding site; sequence GPNASGKS. A disordered region spans residues 857–883; sequence RKGNTQPRARKSSAETEAKTQQFELPF.

The protein belongs to the DNA mismatch repair MutS family.

Functionally, this protein is involved in the repair of mismatches in DNA. It is possible that it carries out the mismatch recognition step. This protein has a weak ATPase activity. In Acaryochloris marina (strain MBIC 11017), this protein is DNA mismatch repair protein MutS.